A 111-amino-acid chain; its full sequence is DNA-binding protein AF_2068 (111 aa).

The protein belongs to the PDCD5 family.

The sequence is that of DNA-binding protein AF_2068 from Archaeoglobus fulgidus (strain ATCC 49558 / DSM 4304 / JCM 9628 / NBRC 100126 / VC-16).